We begin with the raw amino-acid sequence, 341 residues long: LIM and senescent cell antigen-like-containing domain protein 2 (341 aa).

LIM zinc-binding domains follow at residues 13–74 (AMCQ…LFAP), 76–133 (CGFC…EKAK), 138–195 (FICQ…KMGI), 196–255 (PICG…LFGD), and 256–315 (VCYN…FPLE). Ser-328 carries the phosphoserine modification.

As to quaternary structure, interacts with integrin-linked protein kinase 1 (ILK) via the first LIM domain, and in competition with LIMS1. Part of the heterotrimeric IPP complex composed of integrin-linked kinase (ILK), LIMS1 or LIMS2, and PARVA. Interacts with TGFB1I1. In terms of tissue distribution, detected in heart, lung, kidney, liver, urinary bladder, fat, skin, skeletal muscle, uterus, large intestine and testis.

The protein localises to the cell junction. It is found in the focal adhesion. It localises to the cell membrane. Its function is as follows. Adapter protein in a cytoplasmic complex linking beta-integrins to the actin cytoskeleton, bridges the complex to cell surface receptor tyrosine kinases and growth factor receptors. The polypeptide is LIM and senescent cell antigen-like-containing domain protein 2 (Lims2) (Mus musculus (Mouse)).